Here is a 1368-residue protein sequence, read N- to C-terminus: Beclin-1-like protein A (1368 aa).

2 stretches are compositionally biased toward low complexity: residues 24 to 57 (GSGS…NNGP) and 122 to 135 (NSII…SPSN). 5 disordered regions span residues 24 to 64 (GSGS…PSSE), 122 to 249 (NSII…SLMM), 331 to 431 (NKNN…STNS), 819 to 874 (TITP…NNNN), and 992 to 1048 (IDGN…NDNN). Residues 136 to 147 (AITRNNSFNMDP) show a composition bias toward polar residues. Over residues 148–167 (NNNNNNNNNNNNNNNNNNNN) the composition is skewed to low complexity. Residues 168–177 (GEYMNSSIVF) show a composition bias toward polar residues. Residues 179–246 (NNVNNNNNNP…INNSVNSVNS (68 aa)) show a composition bias toward low complexity. Low complexity-rich tracts occupy residues 992–1005 (IDGN…NDNN) and 1015–1048 (NNNN…NDNN). Residues 1047–1150 (NNYNFENEIN…AIRDQLERVS (104 aa)) adopt a coiled-coil conformation.

The protein belongs to the beclin family.

The protein localises to the endosome membrane. Its function is as follows. Involved in autophagy. May be required to recruit the atg8-phosphatidylinositol conjugate and the atg12-atg5 conjugate to the pre-autophagosomal structure. Required for normal survival when exposed to pathogenic bacteria S.typhimurium by promoting autophagic degradation of intracellular S.typhimurium. The protein is Beclin-1-like protein A (atg6A) of Dictyostelium discoideum (Social amoeba).